The primary structure comprises 145 residues: U1 small nuclear ribonucleoprotein C (145 aa).

The segment at Y4–F36 adopts a Matrin-type zinc-finger fold. The tract at residues F67–P91 is disordered. The segment covering G73–P91 has biased composition (pro residues).

It belongs to the U1 small nuclear ribonucleoprotein C family. In terms of assembly, U1 snRNP is composed of the 7 core Sm proteins B/B', D1, D2, D3, E, F and G that assemble in a heptameric protein ring on the Sm site of the small nuclear RNA to form the core snRNP, and at least 3 U1 snRNP-specific proteins U1-70K, U1-A and U1-C. U1-C interacts with U1 snRNA and the 5' splice-site region of the pre-mRNA.

It localises to the nucleus. Component of the spliceosomal U1 snRNP, which is essential for recognition of the pre-mRNA 5' splice-site and the subsequent assembly of the spliceosome. U1-C is directly involved in initial 5' splice-site recognition for both constitutive and regulated alternative splicing. The interaction with the 5' splice-site seems to precede base-pairing between the pre-mRNA and the U1 snRNA. Stimulates commitment or early (E) complex formation by stabilizing the base pairing of the 5' end of the U1 snRNA and the 5' splice-site region. Regulates alternative splicing of a distinct group of target genes. The polypeptide is U1 small nuclear ribonucleoprotein C (Drosophila melanogaster (Fruit fly)).